The primary structure comprises 483 residues: Aspartyl/glutamyl-tRNA(Asn/Gln) amidotransferase subunit B (483 aa).

Belongs to the GatB/GatE family. GatB subfamily. Heterotrimer of A, B and C subunits.

It catalyses the reaction L-glutamyl-tRNA(Gln) + L-glutamine + ATP + H2O = L-glutaminyl-tRNA(Gln) + L-glutamate + ADP + phosphate + H(+). It carries out the reaction L-aspartyl-tRNA(Asn) + L-glutamine + ATP + H2O = L-asparaginyl-tRNA(Asn) + L-glutamate + ADP + phosphate + 2 H(+). Allows the formation of correctly charged Asn-tRNA(Asn) or Gln-tRNA(Gln) through the transamidation of misacylated Asp-tRNA(Asn) or Glu-tRNA(Gln) in organisms which lack either or both of asparaginyl-tRNA or glutaminyl-tRNA synthetases. The reaction takes place in the presence of glutamine and ATP through an activated phospho-Asp-tRNA(Asn) or phospho-Glu-tRNA(Gln). The chain is Aspartyl/glutamyl-tRNA(Asn/Gln) amidotransferase subunit B from Brachyspira hyodysenteriae (strain ATCC 49526 / WA1).